Consider the following 469-residue polypeptide: Probable monogalactosyldiacylglycerol synthase 2, chloroplastic (469 aa).

The transit peptide at 1–42 directs the protein to the chloroplast; that stretch reads MVISVATPRRSIRDAVLGGVLGAGGRQLYQPLRCAFYDGAAG.

This sequence belongs to the glycosyltransferase 28 family.

It localises to the plastid. It is found in the chloroplast membrane. It catalyses the reaction a 1,2-diacyl-sn-glycerol + UDP-alpha-D-galactose = a 1,2-diacyl-3-O-(beta-D-galactosyl)-sn-glycerol + UDP + H(+). Involved in the synthesis of the major structural component of photosynthetic membranes. In Oryza sativa subsp. indica (Rice), this protein is Probable monogalactosyldiacylglycerol synthase 2, chloroplastic (MGD2).